The sequence spans 455 residues: UDP-glycosyltransferase 75B2 (455 aa).

Histidine 16 serves as the catalytic Proton acceptor. Histidine 16 provides a ligand contact to an anthocyanidin. UDP-alpha-D-glucose is bound by residues glutamine 337, histidine 352, tryptophan 355, serine 357, glutamate 360, aspartate 376, and glutamine 377.

It belongs to the UDP-glycosyltransferase family.

It catalyses the reaction (indol-3-yl)acetate + UDP-alpha-D-glucose = 1-O-(indol-3-ylacetyl)-beta-D-glucose + UDP. Its pathway is plant hormone metabolism; auxin conjugation. Its function is as follows. Possesses low catalytic activity in vitro. Also active as glucosyltransferase in vitro on benzoates and benzoate derivatives. In Arabidopsis thaliana (Mouse-ear cress), this protein is UDP-glycosyltransferase 75B2 (UGT75B2).